Reading from the N-terminus, the 462-residue chain is uncharacterized protein (462 aa).

Positions 1–108 are disordered; that stretch reads MEDSNTNKDI…NGQDDQDEMD (108 aa). Positions 36-51 are enriched in basic and acidic residues; it reads TVERILERKQKERESK. Positions 64–95 are enriched in low complexity; the sequence is SSPSSLLSSPISSNDNNNNNNNNNNESFDINN. A coiled-coil region spans residues 119 to 150; it reads LLKRKAALAAKKKESLAEQMKKYNQQYDSIIS. Residues 188 to 208 are disordered; that stretch reads SKLQSLNNNTSPSTSSSNLID. Positions 190–208 are enriched in low complexity; that stretch reads LQSLNNNTSPSTSSSNLID.

This is an uncharacterized protein from Dictyostelium discoideum (Social amoeba).